A 234-amino-acid polypeptide reads, in one-letter code: Thymidine kinase, cytosolic (234 aa).

S2 bears the N-acetylserine mark. 2 positions are modified to phosphoserine: S2 and S13. Residues 26 to 33 (GPMFSGKS), 58 to 60 (DTR), and 97 to 100 (DEGQ) each bind ATP. Residue E98 is the Proton acceptor of the active site. F128 provides a ligand contact to substrate. Residues C153 and C156 each coordinate Zn(2+). Substrate-binding positions include 172–176 (VEVIG) and Y181. Residues C185 and C188 each contribute to the Zn(2+) site. The short motif at 203–205 (KEN) is the KEN box element. A Phosphoserine modification is found at S231.

It belongs to the thymidine kinase family. Homotetramer. Tetramerization from dimerization is induced by ATP and increases catalytic efficiency due to a high affinity for thymidine. Tetramerization is inhibited by phosphorylation at Ser-13. Interacts (via the KEN box) with FZR1. In terms of processing, phosphorylated on Ser-13 in mitosis. Phosphorylation of Ser-13 by CDK1 during mitosis reduces homotetramerization and catalytic efficiency when DNA replication is complete and intracellular TK1 is still present at a high level. Polyubiquitinated. Postmitosis, ubiquitination leads to proteasomal degradation. The KEN box sequence located at the C-terminal region targets for degradation by the anaphase promoting complex (APC/C) activated and rate-limited by FZR1.

The protein resides in the cytoplasm. The enzyme catalyses thymidine + ATP = dTMP + ADP + H(+). Functionally, cell-cycle-regulated enzyme of importance in nucleotide metabolism. Catalyzes the first enzymatic step in the salvage pathway converting thymidine into thymidine monophosphate. Transcriptional regulation limits expression to the S phase of the cell cycle and transient expression coincides with the oscillation in the intracellular dTTP concentration. Also important for the activation of anticancer and antiviral nucleoside analog prodrugs such as 1-b-d-arabinofuranosylcytosine (AraC) and 3c-azido-3c-deoxythymidine (AZT). The polypeptide is Thymidine kinase, cytosolic (Homo sapiens (Human)).